Here is a 451-residue protein sequence, read N- to C-terminus: Probable multidrug resistance protein NorM (451 aa).

A run of 12 helical transmembrane segments spans residues 23–43 (GPVV…TAVI), 53–73 (AAAY…GVML), 101–121 (LALL…FVLP), 132–152 (LVAA…AFIA), 169–189 (VALT…FGWG), 194–214 (LGLA…AALL), 243–263 (WPIG…TLLM), 277–297 (TMQT…ATGV), 316–336 (LVGL…ELAA), 355–375 (LIAA…MDGL), 391–411 (VPLL…GSVL), and 422–442 (LWFG…GRFL).

The protein belongs to the multi antimicrobial extrusion (MATE) (TC 2.A.66.1) family.

It is found in the cell membrane. In terms of biological role, multidrug efflux pump. The sequence is that of Probable multidrug resistance protein NorM (norM) from Deinococcus radiodurans (strain ATCC 13939 / DSM 20539 / JCM 16871 / CCUG 27074 / LMG 4051 / NBRC 15346 / NCIMB 9279 / VKM B-1422 / R1).